The following is a 104-amino-acid chain: Phosphocarrier protein HPr (104 aa).

Residues 17–104 enclose the HPr domain; it reads ELSAIFMIRN…EVFNSGFGEL (88 aa). H31 (pros-phosphohistidine intermediate) is an active-site residue.

It belongs to the HPr family.

Its subcellular location is the cytoplasm. General (non sugar-specific) component of the phosphoenolpyruvate-dependent sugar phosphotransferase system (sugar PTS). This major carbohydrate active-transport system catalyzes the phosphorylation of incoming sugar substrates concomitantly with their translocation across the cell membrane. The phosphoryl group from phosphoenolpyruvate (PEP) is transferred to the phosphoryl carrier protein HPr by enzyme I. Phospho-HPr then transfers it to the PTS EIIA domain. The sequence is that of Phosphocarrier protein HPr (ptsH) from Chlamydia muridarum (strain MoPn / Nigg).